Reading from the N-terminus, the 171-residue chain is Fetal and adult testis-expressed transcript protein homolog (171 aa).

Disordered regions lie at residues Met-1–Ser-27 and Ala-68–Gly-92. A helical transmembrane segment spans residues Thr-151 to Leu-169.

In terms of assembly, interacts with BIK and RNF183. Interacts with IMMT/MIC60and EMD.

The protein localises to the mitochondrion. Its subcellular location is the mitochondrion outer membrane. The protein resides in the endoplasmic reticulum membrane. Functionally, involved in the regulation of endoplasmic reticulum (ER)-mitochondria coupling. Negatively regulates the ER-mitochondria distance and Ca(2+) transfer from ER to mitochondria possibly implicating it in the regulation of apoptosis. May collaborate with RNF183 to restrain BIK protein levels thus regulating apoptotic signaling. The chain is Fetal and adult testis-expressed transcript protein homolog (FATE1) from Sus scrofa (Pig).